A 511-amino-acid polypeptide reads, in one-letter code: Pancreatic alpha-amylase (511 aa).

A signal peptide spans 1-15 (MKLFLLLSAFGFCWA). Glutamine 16 carries the pyrrolidone carboxylic acid modification. 3 disulfides stabilise this stretch: cysteine 43–cysteine 101, cysteine 85–cysteine 130, and cysteine 156–cysteine 175. Ca(2+)-binding residues include asparagine 115, arginine 173, and aspartate 182. Arginine 210 contacts chloride. Aspartate 212 functions as the Nucleophile in the catalytic mechanism. Position 216 (histidine 216) interacts with Ca(2+). Residue glutamate 248 is the Proton donor of the active site. 2 residues coordinate chloride: asparagine 313 and arginine 352. Residues cysteine 393 and cysteine 399 are joined by a disulfide bond. Asparagine 427 carries an N-linked (GlcNAc...) asparagine glycan. Cysteine 465 and cysteine 477 form a disulfide bridge.

Belongs to the glycosyl hydrolase 13 family. In terms of assembly, binds to the sea anemone inhibitor helianthamide and magnificamide. Requires Ca(2+) as cofactor. The cofactor is chloride.

It localises to the secreted. The protein resides in the extracellular space. The catalysed reaction is Endohydrolysis of (1-&gt;4)-alpha-D-glucosidic linkages in polysaccharides containing three or more (1-&gt;4)-alpha-linked D-glucose units.. This is Pancreatic alpha-amylase (AMY2) from Sus scrofa (Pig).